We begin with the raw amino-acid sequence, 113 residues long: Urease subunit beta (113 aa).

The protein belongs to the urease beta subunit family. Heterotrimer of UreA (gamma), UreB (beta) and UreC (alpha) subunits. Three heterotrimers associate to form the active enzyme.

Its subcellular location is the cytoplasm. It carries out the reaction urea + 2 H2O + H(+) = hydrogencarbonate + 2 NH4(+). The protein operates within nitrogen metabolism; urea degradation; CO(2) and NH(3) from urea (urease route): step 1/1. The sequence is that of Urease subunit beta from Cyanothece sp. (strain PCC 7425 / ATCC 29141).